Here is a 177-residue protein sequence, read N- to C-terminus: Cell division protein ZapC (177 aa).

This sequence belongs to the ZapC family. Interacts directly with FtsZ.

It localises to the cytoplasm. Its function is as follows. Contributes to the efficiency of the cell division process by stabilizing the polymeric form of the cell division protein FtsZ. Acts by promoting interactions between FtsZ protofilaments and suppressing the GTPase activity of FtsZ. This is Cell division protein ZapC from Shewanella oneidensis (strain ATCC 700550 / JCM 31522 / CIP 106686 / LMG 19005 / NCIMB 14063 / MR-1).